We begin with the raw amino-acid sequence, 430 residues long: 5-methylthioadenosine/S-adenosylhomocysteine deaminase (430 aa).

H59 and H61 together coordinate Zn(2+). Residues E88 and H181 each contribute to the substrate site. H208 contributes to the Zn(2+) binding site. E211 and D296 together coordinate substrate. D296 provides a ligand contact to Zn(2+).

It belongs to the metallo-dependent hydrolases superfamily. MTA/SAH deaminase family. It depends on Zn(2+) as a cofactor.

It carries out the reaction S-adenosyl-L-homocysteine + H2O + H(+) = S-inosyl-L-homocysteine + NH4(+). The catalysed reaction is S-methyl-5'-thioadenosine + H2O + H(+) = S-methyl-5'-thioinosine + NH4(+). Functionally, catalyzes the deamination of 5-methylthioadenosine and S-adenosyl-L-homocysteine into 5-methylthioinosine and S-inosyl-L-homocysteine, respectively. Is also able to deaminate adenosine. In Aquifex aeolicus (strain VF5), this protein is 5-methylthioadenosine/S-adenosylhomocysteine deaminase.